The sequence spans 23 residues: Paralytic peptide 1 (23 aa).

An intrachain disulfide couples cysteine 7 to cysteine 19.

Belongs to the GBP/PSP1/paralytic peptide family. In terms of tissue distribution, hemolymph.

Its function is as follows. Causes rapid, rigid paralysis when injected into Lepidopteran larvae. The physiological role may be to reduce hemolymph loss following injury and promote wound healing. This is Paralytic peptide 1 from Spodoptera exigua (Beet armyworm).